Consider the following 126-residue polypeptide: Urease subunit beta (126 aa).

This sequence belongs to the urease beta subunit family. As to quaternary structure, heterotrimer of UreA (gamma), UreB (beta) and UreC (alpha) subunits. Three heterotrimers associate to form the active enzyme.

The protein localises to the cytoplasm. It carries out the reaction urea + 2 H2O + H(+) = hydrogencarbonate + 2 NH4(+). Its pathway is nitrogen metabolism; urea degradation; CO(2) and NH(3) from urea (urease route): step 1/1. The sequence is that of Urease subunit beta from Gloeothece citriformis (strain PCC 7424) (Cyanothece sp. (strain PCC 7424)).